Reading from the N-terminus, the 349-residue chain is N-acetyltaurine hydrolase (349 aa).

Residues His-26, His-28, Glu-169, His-201, His-230, and Asp-298 each contribute to the a divalent metal cation site.

It belongs to the metallo-dependent hydrolases superfamily. Phosphotriesterase family. A divalent metal cation is required as a cofactor.

The protein localises to the cytoplasm. It localises to the cytosol. It catalyses the reaction N-acetyltaurine + H2O = taurine + acetate. The catalysed reaction is N-propanoyltaurine + H2O = propanoate + taurine. It carries out the reaction N-acetyl-L-methionine + H2O = L-methionine + acetate. The enzyme catalyses N-acetyl-L-isoleucine + H2O = L-isoleucine + acetate. It catalyses the reaction N-acetyl-L-leucine + H2O = L-leucine + acetate. The catalysed reaction is N-acetyl-L-valine + H2O = L-valine + acetate. Functionally, N-acetyltaurine hydrolase that regulates feeding by catalyzing the hydrolysis of N-acetyltaurine into taurine and acetate. N-acetyltaurine has anorexigenic and anti-obesity effects that are dependent on GFRAL receptor and GDF15. PTER also acts on other N-acetyl amino acids (Met, Ile, Leu, Val) and N-propionyltaurine, but at lower rates. This chain is N-acetyltaurine hydrolase, found in Homo sapiens (Human).